Reading from the N-terminus, the 307-residue chain is Transcription initiation factor IIF subunit beta (307 aa).

Basic and acidic residues predominate over residues 1-12 (MSEEKPTVRTEE). 2 disordered regions span residues 1-22 (MSEE…DAGD) and 261-307 (VELR…IDVV). Positions 13 to 22 (DDRYEDDAGD) are enriched in acidic residues. Residues 263–290 (LRNQQASQSESSSIDHTGKNTSPDNPGT) are compositionally biased toward polar residues. Acidic residues predominate over residues 292–307 (AEEDEDDDGVEMIDVV).

This sequence belongs to the TFIIF beta subunit family. Component of the fcp1/TFIIF/polII complex via interaction of tfg3 with both tfg1/TFIIF-alpha and tfg2/TFIIF-beta subunits.

Its subcellular location is the nucleus. Its function is as follows. TFIIF is a general transcription initiation factor that binds to RNA polymerase II and helps to recruit it to the initiation complex in collaboration with TFIIB. It promotes transcription elongation. This Schizosaccharomyces pombe (strain 972 / ATCC 24843) (Fission yeast) protein is Transcription initiation factor IIF subunit beta (tfg2).